A 161-amino-acid chain; its full sequence is Large ribosomal subunit protein uL10 (161 aa).

Belongs to the universal ribosomal protein uL10 family. Part of the ribosomal stalk of the 50S ribosomal subunit. The N-terminus interacts with L11 and the large rRNA to form the base of the stalk. The C-terminus forms an elongated spine to which L12 dimers bind in a sequential fashion forming a multimeric L10(L12)X complex.

In terms of biological role, forms part of the ribosomal stalk, playing a central role in the interaction of the ribosome with GTP-bound translation factors. In Campylobacter fetus subsp. fetus (strain 82-40), this protein is Large ribosomal subunit protein uL10.